A 207-amino-acid polypeptide reads, in one-letter code: Uridine kinase (207 aa).

13 to 20 (GASGSGKT) contacts ATP.

This sequence belongs to the uridine kinase family.

The protein localises to the cytoplasm. It carries out the reaction uridine + ATP = UMP + ADP + H(+). The catalysed reaction is cytidine + ATP = CMP + ADP + H(+). The protein operates within pyrimidine metabolism; CTP biosynthesis via salvage pathway; CTP from cytidine: step 1/3. Its pathway is pyrimidine metabolism; UMP biosynthesis via salvage pathway; UMP from uridine: step 1/1. The sequence is that of Uridine kinase from Ureaplasma parvum serovar 3 (strain ATCC 27815 / 27 / NCTC 11736).